A 319-amino-acid polypeptide reads, in one-letter code: tRNA pseudouridine synthase B (319 aa).

The Nucleophile role is filled by Asp49.

This sequence belongs to the pseudouridine synthase TruB family. Type 1 subfamily.

The enzyme catalyses uridine(55) in tRNA = pseudouridine(55) in tRNA. In terms of biological role, responsible for synthesis of pseudouridine from uracil-55 in the psi GC loop of transfer RNAs. The polypeptide is tRNA pseudouridine synthase B (Aeromonas salmonicida (strain A449)).